A 122-amino-acid polypeptide reads, in one-letter code: RxLR effector protein Avh52 (122 aa).

A signal peptide spans Met1–Ala21. The RxLR-dEER signature appears at Arg50–Arg68. The TAP1-binding stretch occupies residues Ser69–Val86. The tract at residues Lys87–Lys98 is nuclear localization signal (NLS).

Belongs to the RxLR effector family. In terms of assembly, interacts with host acetyl transferase TAP1.

It localises to the secreted. It is found in the host nucleus. Its function is as follows. Effector that suppresses plant defense responses during the early stages of pathogen infection. Suppresses cell death induced by effectors and PAMPs in plant hosts. Interacts with host acetyltransferase TAP1 and causes TAP1 relocation into the nucleus where it acetylates histones H2A and H3 during early infection, thereby promoting susceptibility of host plant to P.sojae. The protein is RxLR effector protein Avh52 of Phytophthora sojae (Soybean stem and root rot agent).